The primary structure comprises 442 residues: Transforming growth factor beta-2 proprotein (442 aa).

The signal sequence occupies residues 1–20 (MHYCVLRTFLLLHLVPVALS). Residues Asn72, Asn168, and Asn269 are each glycosylated (N-linked (GlcNAc...) asparagine). 4 disulfides stabilise this stretch: Cys337-Cys346, Cys345-Cys408, Cys374-Cys439, and Cys378-Cys441.

The protein belongs to the TGF-beta family. Interacts with the serine proteases, HTRA1 and HTRA3. Interacts with ASPN. Interacts with MFAP5. As to quaternary structure, interacts with Transforming growth factor beta-2 (TGF-beta-2) chain; interaction is non-covalent and maintains (TGF-beta-2) in a latent state. Interacts with LRRC32/GARP; leading to regulate activation of TGF-beta-2. Interacts with NREP; the interaction results in a decrease in TGFB2 autoinduction. In terms of assembly, transforming growth factor beta-2: Homodimer; disulfide-linked. Transforming growth factor beta-2: Interacts with TGF-beta receptors (TGFBR1 and TGFBR2), leading to signal transduction. The precursor proprotein is cleaved in the Golgi apparatus to form Transforming growth factor beta-2 (TGF-beta-2) and Latency-associated peptide (LAP) chains, which remain non-covalently linked, rendering TGF-beta-2 inactive. In terms of tissue distribution, expressed in cardiomyocytes. As to expression, expressed in the aorta, primary bronchus, uterus, heart, skeletal muscle, sciatic nerve and spinal cord but not in the intestine.

It is found in the secreted. It localises to the extracellular space. The protein localises to the extracellular matrix. Its function is as follows. Precursor of the Latency-associated peptide (LAP) and Transforming growth factor beta-2 (TGF-beta-2) chains, which constitute the regulatory and active subunit of TGF-beta-2, respectively. In terms of biological role, required to maintain the Transforming growth factor beta-2 (TGF-beta-2) chain in a latent state during storage in extracellular matrix. Associates non-covalently with TGF-beta-2 and regulates its activation via interaction with 'milieu molecules', such as LTBP1 and LRRC32/GARP, that control activation of TGF-beta-2. Multifunctional protein that regulates various processes such as angiogenesis and heart development. Activation into mature form follows different steps: following cleavage of the proprotein in the Golgi apparatus, Latency-associated peptide (LAP) and Transforming growth factor beta-2 (TGF-beta-2) chains remain non-covalently linked rendering TGF-beta-2 inactive during storage in extracellular matrix. At the same time, LAP chain interacts with 'milieu molecules', such as LTBP1 and LRRC32/GARP, that control activation of TGF-beta-2 and maintain it in a latent state during storage in extracellular milieus. Once activated following release of LAP, TGF-beta-2 acts by binding to TGF-beta receptors (TGFBR1 and TGFBR2), which transduce signal. In Rattus norvegicus (Rat), this protein is Transforming growth factor beta-2 proprotein (Tgfb2).